We begin with the raw amino-acid sequence, 248 residues long: Biosynthetic peptidoglycan transglycosylase (248 aa).

A helical membrane pass occupies residues 17-37; the sequence is LLIFFFASTILAVIVYRFMPV.

Belongs to the glycosyltransferase 51 family.

The protein resides in the cell inner membrane. The catalysed reaction is [GlcNAc-(1-&gt;4)-Mur2Ac(oyl-L-Ala-gamma-D-Glu-L-Lys-D-Ala-D-Ala)](n)-di-trans,octa-cis-undecaprenyl diphosphate + beta-D-GlcNAc-(1-&gt;4)-Mur2Ac(oyl-L-Ala-gamma-D-Glu-L-Lys-D-Ala-D-Ala)-di-trans,octa-cis-undecaprenyl diphosphate = [GlcNAc-(1-&gt;4)-Mur2Ac(oyl-L-Ala-gamma-D-Glu-L-Lys-D-Ala-D-Ala)](n+1)-di-trans,octa-cis-undecaprenyl diphosphate + di-trans,octa-cis-undecaprenyl diphosphate + H(+). The protein operates within cell wall biogenesis; peptidoglycan biosynthesis. Its function is as follows. Peptidoglycan polymerase that catalyzes glycan chain elongation from lipid-linked precursors. The chain is Biosynthetic peptidoglycan transglycosylase from Bacteroides thetaiotaomicron (strain ATCC 29148 / DSM 2079 / JCM 5827 / CCUG 10774 / NCTC 10582 / VPI-5482 / E50).